Consider the following 660-residue polypeptide: GRIP and coiled-coil domain-containing protein 2 (660 aa).

The disordered stretch occupies residues 1–28 (MSAPESSISPVPPPGSSSGGGKKLDSLP). Coiled-coil stretches lie at residues 30-92 (EDLV…VENN), 115-464 (EWKE…KAIA), and 517-596 (DEYR…EYLK). The region spanning 585–636 (ELSNEKNMEYLKNVFVQFLKPESVPAERDQLVIVLQRVLHLSPKEVEILKAA) is the GRIP domain.

The chain is GRIP and coiled-coil domain-containing protein 2 from Caenorhabditis elegans.